The chain runs to 156 residues: Ribonuclease H (156 aa).

The 142-residue stretch at 3-144 (ELKQIRIYTD…CDTLAREAAE (142 aa)) folds into the RNase H type-1 domain. Asp12, Glu50, Asp72, and Asp136 together coordinate Mg(2+).

The protein belongs to the RNase H family. In terms of assembly, monomer. Mg(2+) is required as a cofactor.

The protein localises to the cytoplasm. It catalyses the reaction Endonucleolytic cleavage to 5'-phosphomonoester.. Endonuclease that specifically degrades the RNA of RNA-DNA hybrids. The protein is Ribonuclease H of Shewanella amazonensis (strain ATCC BAA-1098 / SB2B).